The following is a 125-amino-acid chain: Large ribosomal subunit protein bL12 (125 aa).

The protein belongs to the bacterial ribosomal protein bL12 family. In terms of assembly, homodimer. Part of the ribosomal stalk of the 50S ribosomal subunit. Forms a multimeric L10(L12)X complex, where L10 forms an elongated spine to which 2 to 4 L12 dimers bind in a sequential fashion. Binds GTP-bound translation factors.

In terms of biological role, forms part of the ribosomal stalk which helps the ribosome interact with GTP-bound translation factors. Is thus essential for accurate translation. The polypeptide is Large ribosomal subunit protein bL12 (Rhizobium johnstonii (strain DSM 114642 / LMG 32736 / 3841) (Rhizobium leguminosarum bv. viciae)).